Here is a 507-residue protein sequence, read N- to C-terminus: Beta-glucosidase 3 (507 aa).

The signal sequence occupies residues 1–23 (MELTLSLLTIFLLFFALSGRCSD). Residue Gln41 coordinates a beta-D-glucoside. Asn64 carries an N-linked (GlcNAc...) asparagine glycan. Residues His138 and 183 to 184 (NE) each bind a beta-D-glucoside. Catalysis depends on Glu184, which acts as the Proton donor. Cysteines 203 and 210 form a disulfide. N-linked (GlcNAc...) asparagine glycans are attached at residues Asn209 and Asn214. Tyr326 is an a beta-D-glucoside binding site. A glycan (N-linked (GlcNAc...) asparagine) is linked at Asn361. Glu394 contacts a beta-D-glucoside. The Nucleophile role is filled by Glu394. Asn429 is a glycosylation site (N-linked (GlcNAc...) asparagine). A beta-D-glucoside is bound by residues Trp439 and Phe455. N-linked (GlcNAc...) asparagine glycosylation is found at Asn461, Asn485, and Asn500.

This sequence belongs to the glycosyl hydrolase 1 family.

The catalysed reaction is Hydrolysis of terminal, non-reducing beta-D-glucosyl residues with release of beta-D-glucose.. In Arabidopsis thaliana (Mouse-ear cress), this protein is Beta-glucosidase 3.